Consider the following 648-residue polypeptide: MMGIGKNTASKSVEAGGSTEGKYEEEAKHSNFFTLPVVINGGATSSGEQDNEDTELMAIYTTENGIAEKSSLAETLDSTGSLDPQRSDMIYTIEDVPPWYLCIFLGLQHYLTCFSGTIAVPFLLADAMCVGDDQWATSQLIGTIFFCVGITTLLQTTFGCRLPLFQASAFAFLAPARAILSLDKWKCNTTEITVANGTAELLEHIWHPRIQEIQGAIIMSSLIEVVIGLLGLPGALLRYIGPLTITPTVALIGLSGFQAAGERAGKHWGIAMLTIFLVLLFSQYARNVKFPLPIYKSKKGWTAYKFQLFKMFPIILAILVSWLLCFIFTVTDVFPSNSTDYGYYARTDARKGVLLVAPWFKVPYPFQWGMPTVSAAGVIGMLSAVVASIIESIGDYYACARLSCAPPPPIHAINRGIFVEGLSCVLDGIFGTGNGSTSSSPNIGVLGITKVGSRRVIQYGAALMLGLGMVGKFSALFASLPDPVLGALFCTLFGMITAVGLSNLQFIDLNSSRNLFVLGFSIFFGLVLPSYLRQNPLVTGITGIDQILNVLLTTAMFVGGCVAFILDNTIPGTPEERGIKKWKKGVSKGSKSLDGMESYNLPFGMNIIKKYRCFSYLPISPTFAGYTWKGFGKSENSRSSDKDSQATV.

A disordered region spans residues 1-21 (MMGIGKNTASKSVEAGGSTEG). Topologically, residues 9–110 (ASKSVEAGGS…LCIFLGLQHY (102 aa)) are cytoplasmic. Serine 70 carries the phosphoserine modification. Residue threonine 75 is modified to Phosphothreonine. Serine 78 carries the post-translational modification Phosphoserine. Threonine 79 bears the Phosphothreonine mark. Serine 81 bears the Phosphoserine mark. A helical membrane pass occupies residues 111-131 (LTCFSGTIAVPFLLADAMCVG). The Extracellular segment spans residues 132–139 (DDQWATSQ). Residues 140–160 (LIGTIFFCVGITTLLQTTFGC) traverse the membrane as a helical segment. A topological domain (cytoplasmic) is located at residue arginine 161. Residues 162–182 (LPLFQASAFAFLAPARAILSL) form a helical membrane-spanning segment. The Extracellular portion of the chain corresponds to 183 to 216 (DKWKCNTTEITVANGTAELLEHIWHPRIQEIQGA). Asparagine 188 and asparagine 196 each carry an N-linked (GlcNAc...) asparagine glycan. A helical transmembrane segment spans residues 217–237 (IIMSSLIEVVIGLLGLPGALL). Residues 238 to 264 (RYIGPLTITPTVALIGLSGFQAAGERA) are Cytoplasmic-facing. A helical transmembrane segment spans residues 265-282 (GKHWGIAMLTIFLVLLFS). Topologically, residues 283-286 (QYAR) are extracellular. Positions 287-300 (NVKFPLPIYKSKKG) form an intramembrane region, helical. Over 301 to 307 (WTAYKFQ) the chain is Extracellular. Residues 308-328 (LFKMFPIILAILVSWLLCFIF) form a helical membrane-spanning segment. The Cytoplasmic portion of the chain corresponds to 329–369 (TVTDVFPSNSTDYGYYARTDARKGVLLVAPWFKVPYPFQWG). Residues 370–390 (MPTVSAAGVIGMLSAVVASII) form a helical membrane-spanning segment. Residues 391-415 (ESIGDYYACARLSCAPPPPIHAINR) lie on the Extracellular side of the membrane. The chain crosses the membrane as a helical span at residues 416 to 436 (GIFVEGLSCVLDGIFGTGNGS). The Cytoplasmic portion of the chain corresponds to 437–459 (TSSSPNIGVLGITKVGSRRVIQY). The chain crosses the membrane as a helical span at residues 460–480 (GAALMLGLGMVGKFSALFASL). Over 481–483 (PDP) the chain is Extracellular. The chain crosses the membrane as a helical span at residues 484–504 (VLGALFCTLFGMITAVGLSNL). Over 505–514 (QFIDLNSSRN) the chain is Cytoplasmic. The chain crosses the membrane as a helical span at residues 515 to 535 (LFVLGFSIFFGLVLPSYLRQN). The Extracellular portion of the chain corresponds to 536-545 (PLVTGITGID). Residues 546 to 566 (QILNVLLTTAMFVGGCVAFIL) traverse the membrane as a helical segment. The Cytoplasmic segment spans residues 567–648 (DNTIPGTPEE…SSDKDSQATV (82 aa)). Position 647 is a phosphothreonine (threonine 647).

Belongs to the nucleobase:cation symporter-2 (NCS2) (TC 2.A.40) family. Interacts with CLSTN3. In terms of processing, phosphorylated. In terms of tissue distribution, expressed in metabolically active and specialized tissues, including high expression in brain and adrenals. Detected in a wide range of tissues. Expression in kidney is almost undetectable.

It localises to the cell membrane. The enzyme catalyses L-ascorbate(out) + 2 Na(+)(out) = L-ascorbate(in) + 2 Na(+)(in). Sodium/ascorbate cotransporter. Mediates electrogenic uptake of vitamin C, with a stoichiometry of 2 Na(+) for each ascorbate. This Mus musculus (Mouse) protein is Solute carrier family 23 member 2 (Slc23a2).